A 100-amino-acid chain; its full sequence is Urease subunit gamma (100 aa).

It belongs to the urease gamma subunit family. As to quaternary structure, heterotrimer of UreA (gamma), UreB (beta) and UreC (alpha) subunits. Three heterotrimers associate to form the active enzyme.

It is found in the cytoplasm. It carries out the reaction urea + 2 H2O + H(+) = hydrogencarbonate + 2 NH4(+). The protein operates within nitrogen metabolism; urea degradation; CO(2) and NH(3) from urea (urease route): step 1/1. In Staphylococcus saprophyticus subsp. saprophyticus (strain ATCC 15305 / DSM 20229 / NCIMB 8711 / NCTC 7292 / S-41), this protein is Urease subunit gamma.